The chain runs to 332 residues: 6-phosphogluconolactonase (332 aa).

It belongs to the cycloisomerase 2 family.

It catalyses the reaction 6-phospho-D-glucono-1,5-lactone + H2O = 6-phospho-D-gluconate + H(+). It functions in the pathway carbohydrate degradation; pentose phosphate pathway; D-ribulose 5-phosphate from D-glucose 6-phosphate (oxidative stage): step 2/3. Its function is as follows. Catalyzes the hydrolysis of 6-phosphogluconolactone to 6-phosphogluconate. The sequence is that of 6-phosphogluconolactonase from Pectobacterium carotovorum subsp. carotovorum (strain PC1).